Here is a 176-residue protein sequence, read N- to C-terminus: ATP-dependent protease subunit HslV (176 aa).

Thr5 is an active-site residue. The Na(+) site is built by Ser161, Cys164, and Thr167.

The protein belongs to the peptidase T1B family. HslV subfamily. A double ring-shaped homohexamer of HslV is capped on each side by a ring-shaped HslU homohexamer. The assembly of the HslU/HslV complex is dependent on binding of ATP.

The protein resides in the cytoplasm. It catalyses the reaction ATP-dependent cleavage of peptide bonds with broad specificity.. Allosterically activated by HslU binding. In terms of biological role, protease subunit of a proteasome-like degradation complex believed to be a general protein degrading machinery. This is ATP-dependent protease subunit HslV from Thermoanaerobacter pseudethanolicus (strain ATCC 33223 / 39E) (Clostridium thermohydrosulfuricum).